The chain runs to 414 residues: Serine/threonine transporter SstT (414 aa).

Residues 2–15 lie on the Cytoplasmic side of the membrane; it reads TTQRSPGLFRRLAH. The helical transmembrane segment at 16 to 36 threads the bilayer; sequence GSLVKQILVGLVLGILLAWIS. Topologically, residues 37-45 are periplasmic; sequence KPAAEAVGL. Residues 46 to 66 form a helical membrane-spanning segment; sequence LGTLFVGALKAVAPILVLMLV. Topologically, residues 67–83 are cytoplasmic; it reads MASIANHQHGQKTNIRP. A helical transmembrane segment spans residues 84-104; sequence ILFLYLLGTFSAALAAVVFSF. Residues 105 to 142 are Periplasmic-facing; sequence AFPSTLHLSSSAGDISPPSGIVEVMRGLVMSMVSNPID. The chain crosses the membrane as a helical span at residues 143-163; sequence ALLKGNYIGILVWAIGLGFAL. Residues 164–179 lie on the Cytoplasmic side of the membrane; it reads RHGNETTKNLVNDMSN. The chain crosses the membrane as a helical span at residues 180–200; it reads AVTFMVKLVIRFAPFGIFGLV. Over 201 to 217 the chain is Periplasmic; that stretch reads SSTLATTGFSTLWGYAQ. A helical membrane pass occupies residues 218–238; sequence LLVVLVGCMLLVALVVNPLLV. The Cytoplasmic portion of the chain corresponds to 239 to 299; the sequence is WWKIRRNPFP…VSIPLGATIN (61 aa). Residues 300–320 form a helical membrane-spanning segment; it reads MAGAAITITVLTLAAVNTLGI. Over 321 to 331 the chain is Periplasmic; the sequence is PVDLPTALLLS. The helical transmembrane segment at 332–352 threads the bilayer; the sequence is VVASLCACGASGVAGGSLLLI. Residues 353–414 lie on the Cytoplasmic side of the membrane; it reads PLACNMFGIS…DRLANSALRN (62 aa).

The protein belongs to the dicarboxylate/amino acid:cation symporter (DAACS) (TC 2.A.23) family.

It localises to the cell inner membrane. It catalyses the reaction L-serine(in) + Na(+)(in) = L-serine(out) + Na(+)(out). The enzyme catalyses L-threonine(in) + Na(+)(in) = L-threonine(out) + Na(+)(out). Functionally, involved in the import of serine and threonine into the cell, with the concomitant import of sodium (symport system). The polypeptide is Serine/threonine transporter SstT (Shigella flexneri).